Consider the following 258-residue polypeptide: Imidazole glycerol phosphate synthase subunit HisF (258 aa).

Active-site residues include Asp11 and Asp130.

The protein belongs to the HisA/HisF family. As to quaternary structure, heterodimer of HisH and HisF.

The protein resides in the cytoplasm. The enzyme catalyses 5-[(5-phospho-1-deoxy-D-ribulos-1-ylimino)methylamino]-1-(5-phospho-beta-D-ribosyl)imidazole-4-carboxamide + L-glutamine = D-erythro-1-(imidazol-4-yl)glycerol 3-phosphate + 5-amino-1-(5-phospho-beta-D-ribosyl)imidazole-4-carboxamide + L-glutamate + H(+). Its pathway is amino-acid biosynthesis; L-histidine biosynthesis; L-histidine from 5-phospho-alpha-D-ribose 1-diphosphate: step 5/9. In terms of biological role, IGPS catalyzes the conversion of PRFAR and glutamine to IGP, AICAR and glutamate. The HisF subunit catalyzes the cyclization activity that produces IGP and AICAR from PRFAR using the ammonia provided by the HisH subunit. The protein is Imidazole glycerol phosphate synthase subunit HisF of Methylobacterium sp. (strain 4-46).